The following is a 331-amino-acid chain: Probable allantoicase (331 aa).

The protein belongs to the allantoicase family.

It carries out the reaction allantoate + H2O = (S)-ureidoglycolate + urea. It participates in nitrogen metabolism; (S)-allantoin degradation; (S)-ureidoglycolate from allantoate (aminidohydrolase route): step 1/1. This Pseudomonas syringae pv. tomato (strain ATCC BAA-871 / DC3000) protein is Probable allantoicase.